Reading from the N-terminus, the 464-residue chain is Kynureninase (464 aa).

An N-acetylmethionine modification is found at Met1. Pyridoxal 5'-phosphate contacts are provided by residues Leu137, Thr138, 165 to 168 (FPSD), Ser221, Asp250, His253, and Tyr275. Residue Lys276 is modified to N6-(pyridoxal phosphate)lysine. Positions 305 and 333 each coordinate pyridoxal 5'-phosphate.

The protein belongs to the kynureninase family. As to quaternary structure, homodimer. It depends on pyridoxal 5'-phosphate as a cofactor. In terms of tissue distribution, high levels in liver and kidney. Also detected in heart, retina, ovary. Lung, testis and brain.

It is found in the cytoplasm. The protein resides in the cytosol. The enzyme catalyses L-kynurenine + H2O = anthranilate + L-alanine + H(+). It catalyses the reaction 3-hydroxy-L-kynurenine + H2O = 3-hydroxyanthranilate + L-alanine + H(+). It functions in the pathway amino-acid degradation; L-kynurenine degradation; L-alanine and anthranilate from L-kynurenine: step 1/1. Its pathway is cofactor biosynthesis; NAD(+) biosynthesis; quinolinate from L-kynurenine: step 2/3. With respect to regulation, inhibited by o-methylbenzoylalanine (OMBA). Catalyzes the cleavage of L-kynurenine (L-Kyn) and L-3-hydroxykynurenine (L-3OHKyn) into anthranilic acid (AA) and 3-hydroxyanthranilic acid (3-OHAA), respectively. Has a preference for the L-3-hydroxy form. Also has cysteine-conjugate-beta-lyase activity. This is Kynureninase (Kynu) from Rattus norvegicus (Rat).